The following is a 404-amino-acid chain: Cysteine desulfurase IscS (404 aa).

Residues 75 to 76 (AT), N155, Q183, and 203 to 205 (SAH) contribute to the pyridoxal 5'-phosphate site. K206 carries the N6-(pyridoxal phosphate)lysine modification. T243 serves as a coordination point for pyridoxal 5'-phosphate. Residue C328 is the Cysteine persulfide intermediate of the active site. C328 contributes to the [2Fe-2S] cluster binding site.

It belongs to the class-V pyridoxal-phosphate-dependent aminotransferase family. NifS/IscS subfamily. In terms of assembly, homodimer. Forms a heterotetramer with IscU, interacts with other sulfur acceptors. It depends on pyridoxal 5'-phosphate as a cofactor.

The protein localises to the cytoplasm. It carries out the reaction (sulfur carrier)-H + L-cysteine = (sulfur carrier)-SH + L-alanine. It participates in cofactor biosynthesis; iron-sulfur cluster biosynthesis. Master enzyme that delivers sulfur to a number of partners involved in Fe-S cluster assembly, tRNA modification or cofactor biosynthesis. Catalyzes the removal of elemental sulfur atoms from cysteine to produce alanine. Functions as a sulfur delivery protein for Fe-S cluster synthesis onto IscU, an Fe-S scaffold assembly protein, as well as other S acceptor proteins. The sequence is that of Cysteine desulfurase IscS from Pseudomonas fluorescens (strain Pf0-1).